The chain runs to 444 residues: COP9 signalosome complex subunit 2 (444 aa).

Residues 1–31 (MSDNDDDFMCDDDEDYGLEYSEDSNSEPDVD) form a disordered region. Positions 255-417 (AHTDFFEAFK…QVLQLDKINS (163 aa)) constitute a PCI domain.

The protein belongs to the CSN2 family. Component of the CSN complex, probably composed of CSN1b, alien/CSN2, CSN3, CSN4, CSN5, CSN6, CSN7 and CSN8. Interacts with Rpn6. In terms of tissue distribution, expressed during embryonic stages 11-14 in the muscle attachment sites (apodemes); pharynx attachment to the roof of the mouth and in the epidermis of the head for the dorsal and ventral prothoracic pharyngeal muscle attachment. From stage 16 onwards expression is seen in all thoracic and abdominal apodemes.

It is found in the cytoplasm. Its subcellular location is the nucleus. In terms of biological role, component of the COP9 signalosome complex (CSN), a complex involved in various cellular and developmental processes. The CSN complex is an essential regulator of the ubiquitin (Ubl) conjugation pathway by mediating the deneddylation of the cullin subunits of the SCF-type E3 ligase complexes, leading to decrease the Ubl ligase activity of SCF. The CSN complex plays an essential role in oogenesis and embryogenesis and is required for proper photoreceptor R cell differentiation and promote lamina glial cell migration or axon targeting. It also promotes Ubl-dependent degradation of cyclin E (CycE) during early oogenesis. This chain is COP9 signalosome complex subunit 2, found in Drosophila melanogaster (Fruit fly).